We begin with the raw amino-acid sequence, 205 residues long: Holliday junction branch migration complex subunit RuvA (205 aa).

The domain I stretch occupies residues 1–64 (MIGRIRGLLI…EDAQLLYGFI (64 aa)). The tract at residues 65–143 (SKQERSLFRL…SLMEASVGSE (79 aa)) is domain II. A flexible linker region spans residues 144–156 (REFMLQSNYTAPE). Positions 157 to 205 (AVNTAEEDAIAALLSLGYKPAQASKAVSSVYTDGMSSETLIKSALKSML) are domain III.

This sequence belongs to the RuvA family. As to quaternary structure, homotetramer. Forms an RuvA(8)-RuvB(12)-Holliday junction (HJ) complex. HJ DNA is sandwiched between 2 RuvA tetramers; dsDNA enters through RuvA and exits via RuvB. An RuvB hexamer assembles on each DNA strand where it exits the tetramer. Each RuvB hexamer is contacted by two RuvA subunits (via domain III) on 2 adjacent RuvB subunits; this complex drives branch migration. In the full resolvosome a probable DNA-RuvA(4)-RuvB(12)-RuvC(2) complex forms which resolves the HJ.

The protein localises to the cytoplasm. In terms of biological role, the RuvA-RuvB-RuvC complex processes Holliday junction (HJ) DNA during genetic recombination and DNA repair, while the RuvA-RuvB complex plays an important role in the rescue of blocked DNA replication forks via replication fork reversal (RFR). RuvA specifically binds to HJ cruciform DNA, conferring on it an open structure. The RuvB hexamer acts as an ATP-dependent pump, pulling dsDNA into and through the RuvAB complex. HJ branch migration allows RuvC to scan DNA until it finds its consensus sequence, where it cleaves and resolves the cruciform DNA. The chain is Holliday junction branch migration complex subunit RuvA from Shewanella halifaxensis (strain HAW-EB4).